A 367-amino-acid chain; its full sequence is Peptide chain release factor 2 (367 aa).

Position 254 is an N5-methylglutamine (Gln254).

It belongs to the prokaryotic/mitochondrial release factor family. Methylated by PrmC. Methylation increases the termination efficiency of RF2.

Its subcellular location is the cytoplasm. Its function is as follows. Peptide chain release factor 2 directs the termination of translation in response to the peptide chain termination codons UGA and UAA. This chain is Peptide chain release factor 2, found in Neisseria meningitidis serogroup C / serotype 2a (strain ATCC 700532 / DSM 15464 / FAM18).